The following is a 306-amino-acid chain: Palmitoyl-protein thioesterase ABHD10, mitochondrial (306 aa).

The transit peptide at 1 to 52 (MAVARLAAVAAWVPCRSWGWAAVPFGPHRGLSVLLARIPQRAPRWLPACRQK) directs the protein to the mitochondrion. Residues 78 to 178 (IIFIPGYLSY…VVALIGVATA (101 aa)) form the AB hydrolase-1 domain. Residues Ser-152, Asp-249, and His-279 each act as charge relay system in the active site.

Belongs to the AB hydrolase superfamily.

It is found in the mitochondrion. The enzyme catalyses S-hexadecanoyl-L-cysteinyl-[protein] + H2O = L-cysteinyl-[protein] + hexadecanoate + H(+). It catalyses the reaction mycophenolic acid O-acyl-beta-D-glucuronide + H2O = mycophenolate + D-glucuronate + H(+). Its activity is regulated as follows. Inhibited by palmostatin-B. Its function is as follows. Acts as an acyl-protein thioesterase that hydrolyzes fatty acids from acylated residues in proteins. Regulates the mitochondrial S-depalmitoylation of the nucleophilic active site residue of peroxiredoxin-5/PRDX5, a key antioxidant protein, therefore modulating mitochondrial antioxidant ability. Also catalyzes the deglucuronidation of mycophenolic acid acyl-glucuronide, an active metabolite of the immunosuppressant drug mycophenolate. This is Palmitoyl-protein thioesterase ABHD10, mitochondrial from Homo sapiens (Human).